A 350-amino-acid polypeptide reads, in one-letter code: Zona pellucida-binding protein 1 (350 aa).

An N-terminal signal peptide occupies residues 1–38; it reads MEASAPDRARRGWRRARAAASPLSRAAVVLLLSALVLR. 3 N-linked (GlcNAc...) asparagine glycosylation sites follow: Asn113, Asn186, and Asn339.

Belongs to the zona pellucida-binding protein Sp38 family. N-glycosylated. Expressed in testis. Detected in sperm cells.

The protein resides in the cytoplasmic vesicle. It is found in the secretory vesicle. The protein localises to the acrosome. It localises to the secreted. Its subcellular location is the acrosome membrane. In terms of biological role, plays a role in acrosome compaction and sperm morphogenesis. Is implicated in sperm-oocyte interaction during fertilization. The protein is Zona pellucida-binding protein 1 (ZPBP) of Sus scrofa (Pig).